We begin with the raw amino-acid sequence, 417 residues long: Hydrogen cyanide synthase subunit HcnC (417 aa).

Residues 1–18 form the signal peptide; sequence MNRTYDIVIAGGGVIGAS. Residue 7–21 participates in FAD binding; the sequence is IVIAGGGVIGASCAY. Cys19 is lipidated: N-palmitoyl cysteine. Residue Cys19 is the site of S-diacylglycerol cysteine attachment. Residues 46 to 66 traverse the membrane as a helical segment; that stretch reads SAGGLWAIGESVGLGCGVIFF.

This sequence belongs to the FAD-dependent glycerol-3-phosphate dehydrogenase family. As to quaternary structure, heterotrimer of HcnA, HcnB and HcnC. FAD serves as cofactor.

The protein resides in the cell membrane. The catalysed reaction is glycine + 2 A = hydrogen cyanide + 2 AH2 + CO2. Its activity is regulated as follows. Oxygen is necessary for cyanogenesis. Activated by succinate, glycine methyl ester, glucose and D,L-methionine in addition to glycine. Phenazine methosulfate, methylene blue, 2,6-dichlorophenolindophenol (DCIP) and ferricyanide can replace oxygen for the reaction. Inhibited by pyrrolnitrin and acriflavine at 1 mM concentration. A three-component membrane-bound flavoenzyme that catalyzes the formation of hydrogen cyanide, a secondary metabolite, by transfer of electrons to a cyanide-resistant branch of the aerobic respiratory chain. The polypeptide is Hydrogen cyanide synthase subunit HcnC (Pseudomonas aeruginosa (strain ATCC 15692 / DSM 22644 / CIP 104116 / JCM 14847 / LMG 12228 / 1C / PRS 101 / PAO1)).